The sequence spans 357 residues: Inner membrane protein YcfT (357 aa).

Residues 1-12 (MKQKELWINQIK) are Cytoplasmic-facing. Residues 13-33 (GLCICLVVIYHSVITFYPHLT) form a helical membrane-spanning segment. The Periplasmic segment spans residues 34–49 (TFQHPLSEVLSKCWIY). A helical transmembrane segment spans residues 50 to 70 (FNLYLAPFRMPVFFFISGYLI). Residues 71–86 (RRYIDSVPWGNCLDKR) are Cytoplasmic-facing. Residues 87-107 (IWNIFWVLALWGVVQWLALSA) traverse the membrane as a helical segment. Residues 108–135 (LNQWLAPERDLSNASNAAYADSTGEFLH) lie on the Periplasmic side of the membrane. Residues 136–156 (GMITASTSLWYLYALIVYFVV) form a helical membrane-spanning segment. Residues 157 to 162 (CKIFSR) lie on the Cytoplasmic side of the membrane. Residues 163-183 (LALPLFALFVLLSVAVNFVPT) traverse the membrane as a helical segment. At 184-196 (PWWGMNSVIRNLP) the chain is on the periplasmic side. A helical transmembrane segment spans residues 197–217 (YYSLGAWFGATIMTCVKEVPL). At 218 to 231 (RRHLLMASLLTVLA) the chain is on the cytoplasmic side. Residues 232–252 (VGAWLFTISLLLSLVSIVVIM) traverse the membrane as a helical segment. Residues 253-310 (KLFYQYEQRFGMRSTSLLNVIGSNTIAIYTTHRILVEIFSLTLLAQMNAARWSPQVEL) lie on the Periplasmic side of the membrane. The chain crosses the membrane as a helical span at residues 311–331 (TLLLVYPFVSLFICTVAGLLV). The Cytoplasmic segment spans residues 332–357 (RKLSQRAFSDLLFSPPSLPAAVSYSR).

It belongs to the acyltransferase 3 family.

The protein localises to the cell inner membrane. The protein is Inner membrane protein YcfT (ycfT) of Escherichia coli (strain K12).